A 265-amino-acid chain; its full sequence is Aquaporin-5 (265 aa).

The Cytoplasmic segment spans residues 1–12 (MKKEVCSVAFFK). Residues 13–33 (AVFAEFLATLIFVFFGLGSAL) traverse the membrane as a helical segment. Residues 34–39 (KWPSAL) lie on the Extracellular side of the membrane. A helical membrane pass occupies residues 40–60 (PTILQISIAFGLAIGTLAQAL). The Cytoplasmic portion of the chain corresponds to 61-65 (GPVSG). The segment at residues 66 to 74 (GHINPAITL) is an intramembrane region (discontinuously helical). The short motif at 69–71 (NPA) is the NPA 1 element. Over 75-87 (ALLIGNQISLLRA) the chain is Cytoplasmic. The chain crosses the membrane as a helical span at residues 88–108 (IFYVAAQLVGAIAGAGILYWL). Residues 109 to 126 (APGNARGNLAVNALSNNT) are Extracellular-facing. Asn124 is a glycosylation site (N-linked (GlcNAc...) asparagine). A helical membrane pass occupies residues 127-147 (TPGKAVVVELILTFQLALCIF). Residues 148-158 (SSTDSRRTSPV) lie on the Cytoplasmic side of the membrane. A helical transmembrane segment spans residues 159-179 (GSPALSIGLSVTLGHLVGIYF). A topological domain (extracellular) is located at residue Thr180. Positions 181 to 191 (GCSMNPARSFG) form an intramembrane region, discontinuously helical. The NPA 2 signature appears at 185 to 187 (NPA). Residues 192 to 203 (PAVVMNRFSPSH) lie on the Extracellular side of the membrane. Residues 204–224 (WVFWVGPIVGAVLAAILYFYL) form a helical membrane-spanning segment. Topologically, residues 225–265 (LFPSSLSLHDRVAVVKGTYEPEEDWEDHREERKKTIELTAH) are cytoplasmic.

This sequence belongs to the MIP/aquaporin (TC 1.A.8) family. As to quaternary structure, homotetramer; each monomer provides an independent water pore. Interacts with TRPV4; the interaction is probably indirect and regulates TRPV4 activation by hypotonicity. Detected at the luminal membrane of secretory epithelial cells in hindpaw sweat glands. Detected in acinar cells in salivary glands, in duct cells in lacrimal glands and in lung (at protein level). Detected in lung, parotid, submandibular, sublingual, and lacrimal gland tissues.

It localises to the apical cell membrane. The protein resides in the cell membrane. Its subcellular location is the cytoplasmic vesicle membrane. It carries out the reaction H2O(in) = H2O(out). In terms of biological role, aquaporins form homotetrameric transmembrane channels, with each monomer independently mediating water transport across the plasma membrane along its osmotic gradient. Plays an important role in fluid secretion in salivary glands. Required for TRPV4 activation by hypotonicity. Together with TRPV4, controls regulatory volume decrease in salivary epithelial cells. Seems to play a redundant role in water transport in the eye, lung and in sweat glands. This Mus musculus (Mouse) protein is Aquaporin-5.